We begin with the raw amino-acid sequence, 56 residues long: Large ribosomal subunit protein bL32 (56 aa).

The interval 1-37 (MAVQQNKKSRSRRDMRRSHDALTTAAVSVDKASGETH) is disordered. Positions 7-16 (KKSRSRRDMR) are enriched in basic residues.

Belongs to the bacterial ribosomal protein bL32 family.

The polypeptide is Large ribosomal subunit protein bL32 (Haemophilus influenzae (strain PittEE)).